We begin with the raw amino-acid sequence, 353 residues long: MSASGSDEVAGGGQAGSPQDFQRVLRSFGVEGGQYSYRPFVDRSFDVTGVPEAVERHFDQAEHDTAVEEQVTPAPQIAVAPPPPPVVPDPPAIVTETAPPPPVVVSAPVTYEPPAAAVPAEPPVQEAPVQAAPVPPAPVPPIAEQAPPAAPDPASVPYANVAAAPVPPDPAPVTPAPQARVTGPNTRMVEPFSRPQVRTVQEGATPSRVPSRSMNAFPRTSASSISERPVDRGVADEWSPVPKARLSPRERPRPGDLSFFFQGMRDTRDEKKFFPVASTRSVRSNVSRMTSMTKTDTNSSQASRPGSPVASPDGSPTMAEVFMTLGGRATELLSPRPSLREALLRRRENEEES.

3 disordered regions span residues 1–21 (MSASGSDEVAGGGQAGSPQDF), 75–94 (PQIAVAPPPPPVVPDPPAIV), and 117–337 (AVPA…SPRP). Residues 80-91 (APPPPPVVPDPP) show a composition bias toward pro residues. Low complexity-rich tracts occupy residues 117 to 132 (AVPAEPPVQEAPVQAA) and 142 to 164 (IAEQAPPAAPDPASVPYANVAAA). The segment covering 165–175 (PVPPDPAPVTP) has biased composition (pro residues). Polar residues-rich tracts occupy residues 196–226 (QVRTVQEGATPSRVPSRSMNAFPRTSASSIS) and 278–304 (STRSVRSNVSRMTSMTKTDTNSSQASR).

The protein is Cellulose-complementing protein (ccpAX) of Komagataeibacter xylinus (Gluconacetobacter xylinus).